A 430-amino-acid chain; its full sequence is Adenylosuccinate synthetase (430 aa).

GTP-binding positions include 12–18 and 40–42; these read GDEGKGK and GHT. D13 serves as the catalytic Proton acceptor. Residues D13 and G40 each coordinate Mg(2+). Residues 13 to 16, 38 to 41, T130, R144, Q224, and T239 contribute to the IMP site; these read DEGK and NAGH. The active-site Proton donor is the H41. The disordered stretch occupies residues 277-297; sequence PFPTEQDNETGRKIGERGREF. Positions 285–296 are enriched in basic and acidic residues; it reads ETGRKIGERGRE. 299 to 305 contributes to the substrate binding site; it reads TNTGRPR. IMP is bound at residue R303. GTP is bound by residues R305, 331-333, and 413-415; these read KLD and STS.

The protein belongs to the adenylosuccinate synthetase family. In terms of assembly, homodimer. Requires Mg(2+) as cofactor.

It localises to the cytoplasm. The catalysed reaction is IMP + L-aspartate + GTP = N(6)-(1,2-dicarboxyethyl)-AMP + GDP + phosphate + 2 H(+). Its pathway is purine metabolism; AMP biosynthesis via de novo pathway; AMP from IMP: step 1/2. Its function is as follows. Plays an important role in the de novo pathway of purine nucleotide biosynthesis. Catalyzes the first committed step in the biosynthesis of AMP from IMP. In Bradyrhizobium sp. (strain ORS 278), this protein is Adenylosuccinate synthetase.